We begin with the raw amino-acid sequence, 201 residues long: Large ribosomal subunit protein uL4 (201 aa).

Residues 44 to 73 form a disordered region; sequence RAQKSRAEVKASRKKPWRQKGTGRARAGSV. The span at 55 to 66 shows a compositional bias: basic residues; the sequence is SRKKPWRQKGTG.

The protein belongs to the universal ribosomal protein uL4 family. As to quaternary structure, part of the 50S ribosomal subunit.

Functionally, one of the primary rRNA binding proteins, this protein initially binds near the 5'-end of the 23S rRNA. It is important during the early stages of 50S assembly. It makes multiple contacts with different domains of the 23S rRNA in the assembled 50S subunit and ribosome. Its function is as follows. Forms part of the polypeptide exit tunnel. This is Large ribosomal subunit protein uL4 from Hamiltonella defensa subsp. Acyrthosiphon pisum (strain 5AT).